A 215-amino-acid chain; its full sequence is Phosphatidylserine decarboxylase proenzyme (215 aa).

The active-site Schiff-base intermediate with substrate; via pyruvic acid is Ser-183. At Ser-183 the chain carries Pyruvic acid (Ser); by autocatalysis.

The protein belongs to the phosphatidylserine decarboxylase family. PSD-A subfamily. As to quaternary structure, heterodimer of a large membrane-associated beta subunit and a small pyruvoyl-containing alpha subunit. It depends on pyruvate as a cofactor. In terms of processing, is synthesized initially as an inactive proenzyme. Formation of the active enzyme involves a self-maturation process in which the active site pyruvoyl group is generated from an internal serine residue via an autocatalytic post-translational modification. Two non-identical subunits are generated from the proenzyme in this reaction, and the pyruvate is formed at the N-terminus of the alpha chain, which is derived from the carboxyl end of the proenzyme. The post-translation cleavage follows an unusual pathway, termed non-hydrolytic serinolysis, in which the side chain hydroxyl group of the serine supplies its oxygen atom to form the C-terminus of the beta chain, while the remainder of the serine residue undergoes an oxidative deamination to produce ammonia and the pyruvoyl prosthetic group on the alpha chain.

It localises to the cell membrane. It carries out the reaction a 1,2-diacyl-sn-glycero-3-phospho-L-serine + H(+) = a 1,2-diacyl-sn-glycero-3-phosphoethanolamine + CO2. The protein operates within phospholipid metabolism; phosphatidylethanolamine biosynthesis; phosphatidylethanolamine from CDP-diacylglycerol: step 2/2. Functionally, catalyzes the formation of phosphatidylethanolamine (PtdEtn) from phosphatidylserine (PtdSer). The sequence is that of Phosphatidylserine decarboxylase proenzyme from Symbiobacterium thermophilum (strain DSM 24528 / JCM 14929 / IAM 14863 / T).